The sequence spans 430 residues: Serine hydroxymethyltransferase (430 aa).

120–122 (GHI) contacts (6S)-5,6,7,8-tetrahydrofolate. Lys226 bears the N6-(pyridoxal phosphate)lysine mark.

It belongs to the SHMT family. In terms of assembly, homodimer. Requires pyridoxal 5'-phosphate as cofactor.

The protein resides in the cytoplasm. Its pathway is amino-acid biosynthesis; glycine biosynthesis; glycine from L-serine: step 1/1. Catalyzes the reversible interconversion of serine and glycine with a modified folate serving as the one-carbon carrier. Also exhibits a pteridine-independent aldolase activity toward beta-hydroxyamino acids, producing glycine and aldehydes, via a retro-aldol mechanism. The sequence is that of Serine hydroxymethyltransferase from Pyrobaculum aerophilum (strain ATCC 51768 / DSM 7523 / JCM 9630 / CIP 104966 / NBRC 100827 / IM2).